We begin with the raw amino-acid sequence, 167 residues long: uncharacterized protein (167 aa).

It to A.thaliana At2g20940.

This is an uncharacterized protein from Schizosaccharomyces pombe (strain 972 / ATCC 24843) (Fission yeast).